The chain runs to 218 residues: Protein GrpE (218 aa).

2 stretches are compositionally biased toward basic and acidic residues: residues 1-13 (MSKN…HQNN) and 20-32 (VDKK…NKQE). The disordered stretch occupies residues 1-32 (MSKNNENIKHQNNDKVNNQVDKKETKNHNKQE).

It belongs to the GrpE family. Homodimer.

It localises to the cytoplasm. In terms of biological role, participates actively in the response to hyperosmotic and heat shock by preventing the aggregation of stress-denatured proteins, in association with DnaK and GrpE. It is the nucleotide exchange factor for DnaK and may function as a thermosensor. Unfolded proteins bind initially to DnaJ; upon interaction with the DnaJ-bound protein, DnaK hydrolyzes its bound ATP, resulting in the formation of a stable complex. GrpE releases ADP from DnaK; ATP binding to DnaK triggers the release of the substrate protein, thus completing the reaction cycle. Several rounds of ATP-dependent interactions between DnaJ, DnaK and GrpE are required for fully efficient folding. In Ureaplasma parvum serovar 3 (strain ATCC 27815 / 27 / NCTC 11736), this protein is Protein GrpE.